We begin with the raw amino-acid sequence, 326 residues long: DNA-directed RNA polymerase subunit alpha (326 aa).

An alpha N-terminal domain (alpha-NTD) region spans residues 1–231 (MQTALLKPKI…DQLSVFAALE (231 aa)). The alpha C-terminal domain (alpha-CTD) stretch occupies residues 247-326 (IDPILLRPVD…ENWPPAGLEK (80 aa)).

Belongs to the RNA polymerase alpha chain family. Homodimer. The RNAP catalytic core consists of 2 alpha, 1 beta, 1 beta' and 1 omega subunit. When a sigma factor is associated with the core the holoenzyme is formed, which can initiate transcription.

The catalysed reaction is RNA(n) + a ribonucleoside 5'-triphosphate = RNA(n+1) + diphosphate. In terms of biological role, DNA-dependent RNA polymerase catalyzes the transcription of DNA into RNA using the four ribonucleoside triphosphates as substrates. This is DNA-directed RNA polymerase subunit alpha from Ralstonia nicotianae (strain ATCC BAA-1114 / GMI1000) (Ralstonia solanacearum).